The following is a 217-amino-acid chain: Transcriptional regulatory protein CutR (217 aa).

Positions 2–116 (RVLVVEDEQL…ELIARVRALG (115 aa)) constitute a Response regulatory domain. Asp-51 bears the 4-aspartylphosphate mark. The segment at residues 124 to 217 (PPVLERAGIK…VTVPGSGYRI (94 aa)) is a DNA-binding region (ompR/PhoB-type).

Member of the two-component regulatory system CutS/CutR, involved in the regulation of copper metabolism. CutR suppresses a defective melC1 gene, encoding a putative copper-transfer gene, probably by altering copper metabolism. This is Transcriptional regulatory protein CutR (cutR) from Streptomyces lividans.